Here is a 504-residue protein sequence, read N- to C-terminus: Maturase K (504 aa).

Belongs to the intron maturase 2 family. MatK subfamily.

Its subcellular location is the plastid. It is found in the chloroplast. Usually encoded in the trnK tRNA gene intron. Probably assists in splicing its own and other chloroplast group II introns. The chain is Maturase K from Quercus petraea (Durmast oak).